Consider the following 128-residue polypeptide: Mini-ribonuclease 3 (128 aa).

D17 is a catalytic residue.

This sequence belongs to the MrnC RNase family. As to quaternary structure, homodimer. Requires Mg(2+) as cofactor.

It is found in the cytoplasm. Its function is as follows. Involved in correct processing of both the 5' and 3' ends of 23S rRNA precursor. Processes 30S rRNA precursor transcript even in absence of ribonuclease 3 (Rnc); Rnc processes 30S rRNA into smaller rRNA precursors. This chain is Mini-ribonuclease 3, found in Streptococcus pneumoniae (strain ATCC BAA-255 / R6).